The sequence spans 488 residues: Photosystem II CP43 reaction center protein (488 aa).

A propeptide spanning residues 1–29 is cleaved from the precursor; sequence MTKVFALGWLLKINLMKTLYSLRRFYHVE. A run of 5 helical transmembrane segments spans residues 84-108, 149-170, 193-215, 270-290, and 306-327; these read LFEVAHFVPEKPLYEQGFILIPHLA, LIGPDTLEESFPFFGYDWRDKN, KALFIGGVYDTWAPGGGDVRFVS, KPFAWARRAFVWSGEAYLSYS, and WYNNTAYPSEFYGPTGPEASQA. Residue glutamate 382 coordinates [CaMn4O5] cluster. The helical transmembrane segment at 462–486 threads the bilayer; sequence RARAAAAGFEKGINRENEPVLSMRP.

Belongs to the PsbB/PsbC family. PsbC subfamily. PSII is composed of 1 copy each of membrane proteins PsbA, PsbB, PsbC, PsbD, PsbE, PsbF, PsbH, PsbI, PsbJ, PsbK, PsbL, PsbM, PsbT, PsbX, PsbY, PsbZ, Psb30/Ycf12, at least 3 peripheral proteins of the oxygen-evolving complex and a large number of cofactors. It forms dimeric complexes. The cofactor is Binds multiple chlorophylls and provides some of the ligands for the Ca-4Mn-5O cluster of the oxygen-evolving complex. It may also provide a ligand for a Cl- that is required for oxygen evolution. PSII binds additional chlorophylls, carotenoids and specific lipids..

The protein resides in the plastid. Its subcellular location is the chloroplast thylakoid membrane. One of the components of the core complex of photosystem II (PSII). It binds chlorophyll and helps catalyze the primary light-induced photochemical processes of PSII. PSII is a light-driven water:plastoquinone oxidoreductase, using light energy to abstract electrons from H(2)O, generating O(2) and a proton gradient subsequently used for ATP formation. This is Photosystem II CP43 reaction center protein from Pyropia yezoensis (Susabi-nori).